A 135-amino-acid chain; its full sequence is ATP synthase epsilon chain (135 aa).

This sequence belongs to the ATPase epsilon chain family. In terms of assembly, F-type ATPases have 2 components, CF(1) - the catalytic core - and CF(0) - the membrane proton channel. CF(1) has five subunits: alpha(3), beta(3), gamma(1), delta(1), epsilon(1). CF(0) has three main subunits: a, b and c.

The protein resides in the cellular thylakoid membrane. Functionally, produces ATP from ADP in the presence of a proton gradient across the membrane. The chain is ATP synthase epsilon chain from Prochlorococcus marinus (strain NATL1A).